We begin with the raw amino-acid sequence, 195 residues long: Pyridoxal 5'-phosphate synthase subunit PdxT (195 aa).

Position 49–51 (49–51 (GES)) interacts with L-glutamine. The active-site Nucleophile is the Cys81. L-glutamine-binding positions include Arg113 and 141–142 (IR). Residues His177 and Glu179 each act as charge relay system in the active site.

The protein belongs to the glutaminase PdxT/SNO family. As to quaternary structure, in the presence of PdxS, forms a dodecamer of heterodimers. Only shows activity in the heterodimer.

It carries out the reaction aldehydo-D-ribose 5-phosphate + D-glyceraldehyde 3-phosphate + L-glutamine = pyridoxal 5'-phosphate + L-glutamate + phosphate + 3 H2O + H(+). The enzyme catalyses L-glutamine + H2O = L-glutamate + NH4(+). Its pathway is cofactor biosynthesis; pyridoxal 5'-phosphate biosynthesis. In terms of biological role, catalyzes the hydrolysis of glutamine to glutamate and ammonia as part of the biosynthesis of pyridoxal 5'-phosphate. The resulting ammonia molecule is channeled to the active site of PdxS. This Mycolicibacterium vanbaalenii (strain DSM 7251 / JCM 13017 / BCRC 16820 / KCTC 9966 / NRRL B-24157 / PYR-1) (Mycobacterium vanbaalenii) protein is Pyridoxal 5'-phosphate synthase subunit PdxT.